The primary structure comprises 83 residues: MPKAPAREKVLKKKACTFCKESKSGNVSIDYKDTTLLRKYVSDRGKIRARRVTGNCVQHQRDIAVAVKNSREVALLPYVSTAR.

It belongs to the bacterial ribosomal protein bS18 family. As to quaternary structure, part of the 30S ribosomal subunit. Forms a tight heterodimer with protein bS6.

Functionally, binds as a heterodimer with protein bS6 to the central domain of the 16S rRNA, where it helps stabilize the platform of the 30S subunit. This Nocardia farcinica (strain IFM 10152) protein is Small ribosomal subunit protein bS18A.